Consider the following 440-residue polypeptide: Translation initiation factor eIF2B subunit gamma (440 aa).

It belongs to the eIF-2B gamma/epsilon subunits family. As to quaternary structure, component of the translation initiation factor 2B (eIF2B) complex which is a heterodecamer of two sets of five different subunits: alpha, beta, gamma, delta and epsilon. Subunits alpha, beta and delta comprise a regulatory subcomplex and subunits epsilon and gamma comprise a catalytic subcomplex. Within the complex, the hexameric regulatory complex resides at the center, with the two heterodimeric catalytic subcomplexes bound on opposite sides.

The protein localises to the cytoplasm. Its subcellular location is the cytosol. In terms of biological role, acts as a component of the translation initiation factor 2B (eIF2B) complex, which catalyzes the exchange of GDP for GTP on the eukaryotic initiation factor 2 (eIF2) complex gamma subunit. Its guanine nucleotide exchange factor activity is repressed when bound to eIF2 complex phosphorylated on the alpha subunit, thereby limiting the amount of methionyl-initiator methionine tRNA available to the ribosome and consequently global translation is repressed. The protein is Translation initiation factor eIF2B subunit gamma (eif2b3) of Dictyostelium discoideum (Social amoeba).